We begin with the raw amino-acid sequence, 307 residues long: Transcription initiation factor IIB (307 aa).

2 repeat units span residues 123–206 and 217–298.

Belongs to the TFIIB family.

Its function is as follows. Stabilizes TBP binding to an archaeal box-A promoter. Also responsible for recruiting RNA polymerase II to the pre-initiation complex (DNA-TBP-TFIIB). In Sulfolobus acidocaldarius (strain ATCC 33909 / DSM 639 / JCM 8929 / NBRC 15157 / NCIMB 11770), this protein is Transcription initiation factor IIB.